The sequence spans 199 residues: Charged multivesicular body protein 1b (199 aa).

Coiled coils occupy residues L8 to K42 and T178 to V199. A disordered region spans residues E167 to V199. Over residues Q170–T183 the composition is skewed to polar residues. The short motif at D186–R196 is the MIT-interacting motif element.

This sequence belongs to the SNF7 family. Probable peripherally associated component of the endosomal sorting required for transport complex III (ESCRT-III).

It is found in the cytoplasm. The protein localises to the cytosol. It localises to the endosome. Its subcellular location is the late endosome membrane. Probable peripherally associated component of the endosomal sorting required for transport complex III (ESCRT-III) which is involved in multivesicular bodies (MVBs) formation and sorting of endosomal cargo proteins into MVBs. MVBs contain intraluminal vesicles (ILVs) that are generated by invagination and scission from the limiting membrane of the endosome and mostly are delivered to lysosomes enabling degradation of membrane proteins, such as stimulated growth factor receptors, lysosomal enzymes and lipids. This Xenopus laevis (African clawed frog) protein is Charged multivesicular body protein 1b (chmp1b).